We begin with the raw amino-acid sequence, 381 residues long: Lipid-A-disaccharide synthase (381 aa).

The protein belongs to the LpxB family.

The enzyme catalyses a lipid X + a UDP-2-N,3-O-bis[(3R)-3-hydroxyacyl]-alpha-D-glucosamine = a lipid A disaccharide + UDP + H(+). It participates in bacterial outer membrane biogenesis; LPS lipid A biosynthesis. Condensation of UDP-2,3-diacylglucosamine and 2,3-diacylglucosamine-1-phosphate to form lipid A disaccharide, a precursor of lipid A, a phosphorylated glycolipid that anchors the lipopolysaccharide to the outer membrane of the cell. This is Lipid-A-disaccharide synthase from Psychromonas ingrahamii (strain DSM 17664 / CCUG 51855 / 37).